The primary structure comprises 503 residues: Glutamate--tRNA ligase 1 (503 aa).

Positions 17 to 27 (PSPTGFLHIGN) match the 'HIGH' region motif. The 'KMSKS' region signature appears at 261–265 (KLSKR). K264 provides a ligand contact to ATP.

The protein belongs to the class-I aminoacyl-tRNA synthetase family. Glutamate--tRNA ligase type 1 subfamily. As to quaternary structure, monomer.

The protein resides in the cytoplasm. It catalyses the reaction tRNA(Glu) + L-glutamate + ATP = L-glutamyl-tRNA(Glu) + AMP + diphosphate. Its function is as follows. Catalyzes the attachment of glutamate to tRNA(Glu) in a two-step reaction: glutamate is first activated by ATP to form Glu-AMP and then transferred to the acceptor end of tRNA(Glu). This is Glutamate--tRNA ligase 1 from Levilactobacillus brevis (strain ATCC 367 / BCRC 12310 / CIP 105137 / JCM 1170 / LMG 11437 / NCIMB 947 / NCTC 947) (Lactobacillus brevis).